The sequence spans 213 residues: ATP phosphoribosyltransferase (213 aa).

Belongs to the ATP phosphoribosyltransferase family. Short subfamily. In terms of assembly, heteromultimer composed of HisG and HisZ subunits.

Its subcellular location is the cytoplasm. It catalyses the reaction 1-(5-phospho-beta-D-ribosyl)-ATP + diphosphate = 5-phospho-alpha-D-ribose 1-diphosphate + ATP. It participates in amino-acid biosynthesis; L-histidine biosynthesis; L-histidine from 5-phospho-alpha-D-ribose 1-diphosphate: step 1/9. Functionally, catalyzes the condensation of ATP and 5-phosphoribose 1-diphosphate to form N'-(5'-phosphoribosyl)-ATP (PR-ATP). Has a crucial role in the pathway because the rate of histidine biosynthesis seems to be controlled primarily by regulation of HisG enzymatic activity. In Listeria monocytogenes serotype 4a (strain HCC23), this protein is ATP phosphoribosyltransferase.